The sequence spans 481 residues: Bifunctional protein HldE (481 aa).

The ribokinase stretch occupies residues 1 to 318 (MKVTLPDFRR…ENAIRGRAET (318 aa)). Position 195-198 (195-198 (NLSE)) interacts with ATP. The active site involves D264. The cytidylyltransferase stretch occupies residues 344 to 481 (MTNGIFDILH…KRRAGQRTVV (138 aa)).

This sequence in the N-terminal section; belongs to the carbohydrate kinase PfkB family. It in the C-terminal section; belongs to the cytidylyltransferase family. Homodimer.

It catalyses the reaction D-glycero-beta-D-manno-heptose 7-phosphate + ATP = D-glycero-beta-D-manno-heptose 1,7-bisphosphate + ADP + H(+). The catalysed reaction is D-glycero-beta-D-manno-heptose 1-phosphate + ATP + H(+) = ADP-D-glycero-beta-D-manno-heptose + diphosphate. It functions in the pathway nucleotide-sugar biosynthesis; ADP-L-glycero-beta-D-manno-heptose biosynthesis; ADP-L-glycero-beta-D-manno-heptose from D-glycero-beta-D-manno-heptose 7-phosphate: step 1/4. Its pathway is nucleotide-sugar biosynthesis; ADP-L-glycero-beta-D-manno-heptose biosynthesis; ADP-L-glycero-beta-D-manno-heptose from D-glycero-beta-D-manno-heptose 7-phosphate: step 3/4. Its function is as follows. Catalyzes the phosphorylation of D-glycero-D-manno-heptose 7-phosphate at the C-1 position to selectively form D-glycero-beta-D-manno-heptose-1,7-bisphosphate. Catalyzes the ADP transfer from ATP to D-glycero-beta-D-manno-heptose 1-phosphate, yielding ADP-D-glycero-beta-D-manno-heptose. The polypeptide is Bifunctional protein HldE (Sodalis glossinidius (strain morsitans)).